A 111-amino-acid polypeptide reads, in one-letter code: Ig kappa chain V-III region PC 3741/TEPC 111 (111 aa).

The tract at residues 1 to 23 (DIVLTQSPASLAVSLGQRATISC) is framework-1. Cysteine 23 and cysteine 92 form a disulfide bridge. Positions 24–38 (RASESVDSYGNSFMH) are complementarity-determining-1. The segment at 39 to 53 (WYQQKPGQPPKLLIY) is framework-2. The segment at 54–60 (RASNLES) is complementarity-determining-2. A framework-3 region spans residues 61 to 92 (GIPARFSGSGSRTDFTLTINPVEADDVATYYC). The tract at residues 93–101 (QQSNEDPYT) is complementarity-determining-3. The interval 102–111 (FGGGTKLEIK) is framework-4.

In Mus musculus (Mouse), this protein is Ig kappa chain V-III region PC 3741/TEPC 111.